The primary structure comprises 525 residues: Transcriptional regulatory protein TOD6 (525 aa).

Residues G22–D82 are disordered. A compositionally biased stretch (polar residues) spans L35–K47. Residues S61–K71 show a composition bias toward basic and acidic residues. Positions A67–L124 constitute an HTH myb-type domain. The H-T-H motif DNA-binding region spans W97–K120. A Phosphoserine modification is found at S280. The disordered stretch occupies residues P283–S308. Low complexity predominate over residues H299 to S308. A phosphoserine mark is found at S333, S341, and S366. The disordered stretch occupies residues T451–E510. Polar residues-rich tracts occupy residues G472–Y483 and S495–D506.

It belongs to the DOT6 family. Component of the RPD3C(L) complex composed of at least ASH1, CTI6, DEP1, DOT6, PHO23, RPD3, RXT2, RXT3, SAP30, SDS3, SIN3, TOD6; UME1 and UME6.

The protein localises to the cytoplasm. It is found in the nucleus. Functionally, component of the RPD3 histone deacetylase complex RPD3C(L) responsible for the deacetylation of lysine residues on the N-terminal part of the core histones (H2A, H2B, H3 and H4). Histone deacetylation gives a tag for epigenetic repression and plays an important role in transcriptional regulation, cell cycle progression and developmental events. TOD6 binds to sequences containing the core CGATG, which resembles the PAC (Polymerase A and C) motif. This Saccharomyces cerevisiae (strain ATCC 204508 / S288c) (Baker's yeast) protein is Transcriptional regulatory protein TOD6 (TOD6).